A 450-amino-acid polypeptide reads, in one-letter code: Probable ATP-dependent RNA helicase MG425 homolog (450 aa).

A Q motif motif is present at residues 3–31 (STFNELGVSPALIATLKDNNINQPTTIQQ). The Helicase ATP-binding domain maps to 34 to 206 (IPQFLQHQNL…KQITKNGIFL (173 aa)). Position 47–54 (47–54 (SPTGTGKT)) interacts with ATP. The DEVD box motif lies at 154–157 (DEVD). The Helicase C-terminal domain maps to 234–384 (RKKQALYSLV…PLRPMRLRLI (151 aa)). The tract at residues 429-450 (MRQPERDMQKNKLHDSDWQSNM) is disordered. A compositionally biased stretch (basic and acidic residues) spans 430 to 450 (RQPERDMQKNKLHDSDWQSNM).

This sequence belongs to the DEAD box helicase family.

The enzyme catalyses ATP + H2O = ADP + phosphate + H(+). The chain is Probable ATP-dependent RNA helicase MG425 homolog from Mycoplasma pneumoniae (strain ATCC 29342 / M129 / Subtype 1) (Mycoplasmoides pneumoniae).